A 354-amino-acid polypeptide reads, in one-letter code: Trans-enoyl reductase pydC (354 aa).

Positions 16–342 (ANTDPVTFEI…RREVSGEKIV (327 aa)) constitute an Enoyl reductase (ER) domain. Residues 51 to 54 (CDYK), 180 to 183 (SPKN), tyrosine 198, 245 to 246 (FE), and 336 to 337 (VS) each bind NADP(+).

It belongs to the zinc-containing alcohol dehydrogenase family. Monomer.

The protein operates within mycotoxin biosynthesis. Functionally, trans-enoyl reductase; part of the gene cluster that mediates the biosynthesis of pyrrocidines, fungal natural products containing a macrocyclic para-cyclophane connected to a decahydrofluorene ring system that show potent antibiotic activities toward Gram-negative bacteria. Within the pathway, the PKS-NRPS pydA, with the help of the trans-enoyl reductase pydC, synthesize the polyketide-tyrosyl acyl thioester product which can be reductively off-loaded by the terminal reductase (R) domain in pydA. The PKS module of pydA acts in combination with the trans-acting enoyl reductase pydC to produce a methylated polyketide attached to the ACP domain. In parallel, the adenylation (A) domain of the NRPS module activated L-tyrosine, which is then transferred to the ACP domain. The condensation (C) domain subsequently link this group to the polyketide chain, forming an enzyme-bound amide. The alpha/beta hydrolase pydG is then required to catalyze the subsequent Knoevenagel condensation that affords the 3-pyrrolin-2-one ring, whereas the four proteins pydB, pydE, pydX and pydZ then function synergistically to form the cyclophane. PydB and the membrane-bound pydX and pydZ are lipid-binding proteins that can sequester and mold the pdyG product into the inverse S-shape. Binding of the medium chain reductase pydE to the complex would trigger the cascade oxidative cyclization. PydY is involved in the Diels-Alder cycloaddition that forms the decahydrofluorene core. Additional non-enzymatic hydroxylation yields pyrrocidine A2 which can be further reduced into pyrrocidine B by an endogenous reductase. This Acremonium sp protein is Trans-enoyl reductase pydC.